We begin with the raw amino-acid sequence, 437 residues long: Methylenetetrahydrofolate--tRNA-(uracil-5-)-methyltransferase TrmFO (437 aa).

10-15 is a binding site for FAD; the sequence is GAGLAG.

This sequence belongs to the MnmG family. TrmFO subfamily. FAD is required as a cofactor.

It is found in the cytoplasm. The catalysed reaction is uridine(54) in tRNA + (6R)-5,10-methylene-5,6,7,8-tetrahydrofolate + NADH + H(+) = 5-methyluridine(54) in tRNA + (6S)-5,6,7,8-tetrahydrofolate + NAD(+). It carries out the reaction uridine(54) in tRNA + (6R)-5,10-methylene-5,6,7,8-tetrahydrofolate + NADPH + H(+) = 5-methyluridine(54) in tRNA + (6S)-5,6,7,8-tetrahydrofolate + NADP(+). Its function is as follows. Catalyzes the folate-dependent formation of 5-methyl-uridine at position 54 (M-5-U54) in all tRNAs. This Pelotomaculum thermopropionicum (strain DSM 13744 / JCM 10971 / SI) protein is Methylenetetrahydrofolate--tRNA-(uracil-5-)-methyltransferase TrmFO.